The sequence spans 641 residues: Probable potassium transport system protein Kup (641 aa).

12 helical membrane-spanning segments follow: residues 29–49, 66–86, 119–139, 156–176, 185–205, 231–251, 266–286, 298–318, 356–376, 384–404, 415–435, and 438–458; these read ISLA…LYAI, ILGV…LKYL, WVLV…AMIT, PAFA…LFLF, GALF…LGII, LHGF…EALY, WVLF…AFLL, ALVP…ATVI, IYVP…VLGF, AAYG…FFFV, VLWA…GASM, and LFHG…LMNT.

The protein belongs to the HAK/KUP transporter (TC 2.A.72) family.

It is found in the cell inner membrane. The enzyme catalyses K(+)(in) + H(+)(in) = K(+)(out) + H(+)(out). Functionally, transport of potassium into the cell. Likely operates as a K(+):H(+) symporter. The sequence is that of Probable potassium transport system protein Kup from Chlorobium phaeovibrioides (strain DSM 265 / 1930) (Prosthecochloris vibrioformis (strain DSM 265)).